The chain runs to 1142 residues: Nucleoporin nup131 (1142 aa).

It belongs to the nucleoporin Nup133 family. In terms of assembly, component of the npc107-120 complex which consists of nup85, nup107, nup120, nup131, nup132 and seh1. Interacts with nup107.

The protein localises to the nucleus. In terms of biological role, functions as a component of the nuclear pore complex (NPC). NPC components, collectively referred to as nucleoporins (NUPs), can play the role of both NPC structural components and of docking or interaction partners for transiently associated nuclear transport factors. Active directional transport is assured by both, a Phe-Gly (FG) repeat affinity gradient for these transport factors across the NPC and a transport cofactor concentration gradient across the nuclear envelope. This Schizosaccharomyces pombe (strain 972 / ATCC 24843) (Fission yeast) protein is Nucleoporin nup131 (nup131).